Here is a 212-residue protein sequence, read N- to C-terminus: Thymidylate kinase (212 aa).

Residue Gly10–Thr17 participates in ATP binding.

This sequence belongs to the thymidylate kinase family.

The enzyme catalyses dTMP + ATP = dTDP + ADP. Functionally, phosphorylation of dTMP to form dTDP in both de novo and salvage pathways of dTTP synthesis. The sequence is that of Thymidylate kinase from Enterococcus faecalis (strain ATCC 700802 / V583).